A 70-amino-acid polypeptide reads, in one-letter code: Small ribosomal subunit protein bS21 (70 aa).

This sequence belongs to the bacterial ribosomal protein bS21 family.

The polypeptide is Small ribosomal subunit protein bS21 (Nautilia profundicola (strain ATCC BAA-1463 / DSM 18972 / AmH)).